Reading from the N-terminus, the 249-residue chain is Isoprenyl transferase (249 aa).

D25 is an active-site residue. D25 is a Mg(2+) binding site. Substrate is bound by residues 26 to 29 (GNGR), W30, R38, H42, and 70 to 72 (STE). Catalysis depends on N73, which acts as the Proton acceptor. Residues W74, R76, R197, and 203-205 (RLS) each bind substrate. E216 provides a ligand contact to Mg(2+).

The protein belongs to the UPP synthase family. As to quaternary structure, homodimer. The cofactor is Mg(2+).

In terms of biological role, catalyzes the condensation of isopentenyl diphosphate (IPP) with allylic pyrophosphates generating different type of terpenoids. The sequence is that of Isoprenyl transferase from Streptococcus thermophilus (strain CNRZ 1066).